The sequence spans 176 residues: Peptide methionine sulfoxide reductase MsrA (176 aa).

Cys12 is an active-site residue.

The protein belongs to the MsrA Met sulfoxide reductase family.

The enzyme catalyses L-methionyl-[protein] + [thioredoxin]-disulfide + H2O = L-methionyl-(S)-S-oxide-[protein] + [thioredoxin]-dithiol. The catalysed reaction is [thioredoxin]-disulfide + L-methionine + H2O = L-methionine (S)-S-oxide + [thioredoxin]-dithiol. Functionally, has an important function as a repair enzyme for proteins that have been inactivated by oxidation. Catalyzes the reversible oxidation-reduction of methionine sulfoxide in proteins to methionine. The polypeptide is Peptide methionine sulfoxide reductase MsrA (Thermus thermophilus (strain ATCC BAA-163 / DSM 7039 / HB27)).